Here is a 977-residue protein sequence, read N- to C-terminus: SLIT and NTRK-like protein 3 (977 aa).

The first 26 residues, 1-26 (MKPSIAEMLHRGRMLWIILLSTIALG), serve as a signal peptide directing secretion. At 29–654 (TPIPLIEDSE…SPPGGPVPLS (626 aa)) the chain is on the extracellular side. N68 carries N-linked (GlcNAc...) asparagine glycosylation. 6 LRR repeats span residues 78-99 (RPFK…SFLH), 102-123 (NAVS…AFNG), 126-147 (ILKR…TFLG), 150-171 (SLEY…AFRN), 174-195 (KLRV…LFKA), and 197-218 (SLTH…GMLD). Residues 232–283 (NPWNCTCEIVQLKSWLERIPYTALVGDITCETPFHFHGKDLREIRKTELCPL) enclose the LRRCT 1 domain. The tract at residues 325-360 (EYKSSNKQPKPTKQPRTPRPPSTSQALYPGPNQPPI) is disordered. The 43-residue stretch at 364 to 406 (QTRPPIPIICPTGCTCNLHINDLGLTVNCKERGFNNISELLPR) folds into the LRRNT domain. 6 LRR repeats span residues 409–430 (NAKK…DFWN), 433–454 (SLDL…AFIN), 457–478 (NLKS…MFRG), 481–502 (SLHY…AFSL), 505–526 (NLKL…AFAG), and 528–549 (SLAR…GVLE). An LRRCT 2 domain is found at 562–613 (NPWDCTCDLVPFKQWIETISSVSVVGDVLCRSPENLTHRDVRTIELEVLCPE). The N-linked (GlcNAc...) asparagine glycan is linked to N596. The helical transmembrane segment at 655 to 675 (VLILSLLVLFFSAVFVAAGLF) threads the bilayer. Topologically, residues 676-977 (AYVLRRRRKK…EVLEKTTYRF (302 aa)) are cytoplasmic. 2 disordered regions span residues 708-735 (LFED…KAPP) and 761-790 (EEEV…MGEA). The span at 711–724 (DGGGGGGGSGGGGR) shows a compositional bias: gly residues. Residues 765 to 775 (AVSSAQEAGSA) are compositionally biased toward low complexity.

Belongs to the SLITRK family. In terms of tissue distribution, expressed in the occipital lobe of the cerebral cortex of the brain. Expressed at higher levels in some astrocytic brain tumors such as astrocytomas, oligodendrogliomas, glioblastomas, gangliogliomas and primitive neuroectodermal tumors.

The protein resides in the membrane. Its function is as follows. Suppresses neurite outgrowth. This is SLIT and NTRK-like protein 3 (SLITRK3) from Homo sapiens (Human).